Consider the following 370-residue polypeptide: D-alanine--D-alanine ligase (370 aa).

The ATP-grasp domain occupies 144–352 (KKIFADAGIP…YSALIERLVD (209 aa)). 177–232 (EEVLTYPVFVKPANLGSSVGISKATNKKELEDAMTEAFLYDRRVVVEQGVVAREIE) contributes to the ATP binding site. Mg(2+) contacts are provided by D306, E319, and N321.

It belongs to the D-alanine--D-alanine ligase family. Requires Mg(2+) as cofactor. The cofactor is Mn(2+).

It localises to the cytoplasm. It catalyses the reaction 2 D-alanine + ATP = D-alanyl-D-alanine + ADP + phosphate + H(+). Its pathway is cell wall biogenesis; peptidoglycan biosynthesis. Functionally, cell wall formation. The sequence is that of D-alanine--D-alanine ligase from Listeria welshimeri serovar 6b (strain ATCC 35897 / DSM 20650 / CCUG 15529 / CIP 8149 / NCTC 11857 / SLCC 5334 / V8).